The following is a 721-amino-acid chain: MDAVIAPRHEDCRDVERRAEPLPANAPLPMPVQSLLQSPRAAAVRSPAAWRRVLIMVATAVLSAAGIYEMYQVLQVGGITVLEGVVLVLFAALFAWVALSFVSALAGFTVLCCGWRDDVGISTDGSLPSVSSRIAMLLPTYNEDAPVVFARLQATRQSVDETGRGAQFDWFVLSDSTDPSVWIDEERCYAELAATHDRLYYRHRPHNTARKSGNIADWVERFGGAYDFMVILDADSVMTGDVLVRVAAAMETNSDVGLIQTLPVVVQARTLFARVQQFAGSIYGPMIAAGTAWWHGSESNYWGHNAIIRVSAFAGSAGLPTLAGRKPFGGEILSHDFVEAALMRRAGWRIHLAPTLRGSYEECPPSLLDFAARDRRWCQGNLQHGKLLTARGLHWVSRLHFLTGIGAYLTAPMWLAFLIAGILISLQAQFVRPEYFPKDFSLFPIWPAQDPVRAAWVFAGTMGLLILPKLLALFLVLIRSDTRRRFGGGLRTFGGVLLETMISALTAPVMMVFQSTAVIEILLGRDAGWQVQHRGDGAIPLREVVRRYALPTALGTTMAIGAWLVSWPLLLWMTPVIVGLLLAIPVALLTTRASRSRPLLMMTPEQIDPPAILAQVHALADRLCPANQTTDPLSALRGDRRLRELHLAALAFHPPRRRGRIDPHLATARVLIDDAESYSEAAGWLGPREIRAVLGDRETLQRLLQLSGEHAQLAVGSEPSG.

The next 6 helical transmembrane spans lie at 53–75 (VLIM…QVLQ), 85–107 (VVLV…ALAG), 404–426 (GIGA…LISL), 456–478 (WVFA…LVLI), 490–512 (LRTF…VMMV), and 567–589 (WPLL…VALL).

The protein belongs to the glycosyltransferase 2 family. OpgH subfamily.

The protein resides in the cell inner membrane. Its pathway is glycan metabolism; osmoregulated periplasmic glucan (OPG) biosynthesis. Involved in the biosynthesis of osmoregulated periplasmic glucans (OPGs). The chain is Glucans biosynthesis glucosyltransferase H from Rhodopseudomonas palustris (strain ATCC BAA-98 / CGA009).